A 191-amino-acid polypeptide reads, in one-letter code: ATP-dependent dethiobiotin synthetase BioD 2 (191 aa).

Position 13 to 18 (13 to 18) interacts with ATP; sequence DVGKTI. Thr-17 is a binding site for Mg(2+). Lys-38 is an active-site residue. Residue Thr-42 participates in substrate binding. ATP-binding positions include Asp-50 and 115–118; that span reads EGAG. Residues Asp-50 and Glu-115 each contribute to the Mg(2+) site.

The protein belongs to the dethiobiotin synthetase family. As to quaternary structure, homodimer. It depends on Mg(2+) as a cofactor.

It localises to the cytoplasm. It catalyses the reaction (7R,8S)-7,8-diammoniononanoate + CO2 + ATP = (4R,5S)-dethiobiotin + ADP + phosphate + 3 H(+). It functions in the pathway cofactor biosynthesis; biotin biosynthesis; biotin from 7,8-diaminononanoate: step 1/2. Catalyzes a mechanistically unusual reaction, the ATP-dependent insertion of CO2 between the N7 and N8 nitrogen atoms of 7,8-diaminopelargonic acid (DAPA, also called 7,8-diammoniononanoate) to form a ureido ring. The chain is ATP-dependent dethiobiotin synthetase BioD 2 from Haemophilus influenzae (strain ATCC 51907 / DSM 11121 / KW20 / Rd).